A 219-amino-acid polypeptide reads, in one-letter code: MGLFRSPRQNLPTAADALPGRAEPLPVGNIHAVNGHPLKPPFPAGLETAVFGMGCFWGVERKFWQVPGVYSTAAGYAGGPTPNPTYEEVCTGRTGHAEVVLVVYDPATVSYAELLKVFWENHDPTQGMRQGNDVGTQYRSAIYATTPEQLRLAEASRDSYASRLKAQGYGAVTTEIREAPAFYYAEDYHQQYLHKKPWGYCGLGGTGVSCPLPTGVAAD.

The interval 1 to 20 is disordered; sequence MGLFRSPRQNLPTAADALPG. Residue C55 is part of the active site.

The protein belongs to the MsrA Met sulfoxide reductase family.

It carries out the reaction L-methionyl-[protein] + [thioredoxin]-disulfide + H2O = L-methionyl-(S)-S-oxide-[protein] + [thioredoxin]-dithiol. It catalyses the reaction [thioredoxin]-disulfide + L-methionine + H2O = L-methionine (S)-S-oxide + [thioredoxin]-dithiol. In terms of biological role, has an important function as a repair enzyme for proteins that have been inactivated by oxidation. Catalyzes the reversible oxidation-reduction of methionine sulfoxide in proteins to methionine. The polypeptide is Peptide methionine sulfoxide reductase MsrA (Rhodospirillum centenum (strain ATCC 51521 / SW)).